A 444-amino-acid chain; its full sequence is Protein EVI2B (444 aa).

The first 23 residues, 1-23, serve as a signal peptide directing secretion; that stretch reads MEFKYLVFIVLCQYLDNTFFSET. Over 24–203 the chain is Extracellular; sequence EAITTEQQSL…GTAHKNNHNA (180 aa). N-linked (GlcNAc...) asparagine glycans are attached at residues N63, N94, N104, and N127. 2 stretches are compositionally biased toward polar residues: residues 104 to 131 and 160 to 171; these read NNSL…STGQ and THNQPTKSTPTI. Positions 104–197 are disordered; the sequence is NNSLPQTSPS…EPPSGKGTAH (94 aa). Residues 177–187 show a composition bias toward pro residues; the sequence is TPPPPPPPLTS. The helical transmembrane segment at 204-224 threads the bilayer; the sequence is IAAILIGTIIISMLVAILMII. At 225-444 the chain is on the cytoplasmic side; it reads LWKYLRKPVL…SLPPPPTELL (220 aa). T250 carries the phosphothreonine modification. 4 positions are modified to phosphoserine: S269, S272, S279, and S295. 2 stretches are compositionally biased toward polar residues: residues 318–332 and 361–370; these read SEDS…TAVS and SPLPNDSINP. Disordered regions lie at residues 318–337 and 361–444; these read SEDS…DDAD and SPLP…TELL.

As to expression, expressed in myeloid and lymphoid progenitors and increased in mature hematopoietic populations with the highest levels in granulocytes.

It is found in the membrane. Functionally, required for granulocyte differentiation and functionality of hematopoietic progenitor cells through the control of cell cycle progression and survival of hematopoietic progenitor cells. This Mus musculus (Mouse) protein is Protein EVI2B.